A 769-amino-acid polypeptide reads, in one-letter code: Integrin beta-2 (769 aa).

The N-terminal stretch at 1–22 (MLCRCSPLLLLVGLLTLRSALS) is a signal peptide. Q23 bears the Pyrrolidone carboxylic acid mark. The Extracellular segment spans residues 23–700 (QECAKYKVST…ETRECVKGPN (678 aa)). The PSI domain maps to 24 to 74 (ECAKYKVSTCRDCIESGPGCAWCQKLNFSGQGEPDSVRCDTREQLLAKGCV). Cystine bridges form between C25/C43, C33/C447, C36/C62, C46/C73, C191/C198, C246/C286, C386/C400, C420/C445, C449/C467, C459/C470, C472/C481, C483/C514, C497/C512, C506/C517, C519/C534, C536/C559, C541/C557, C549/C562, C564/C573, C575/C598, C582/C596, C590/C601, C603/C612, C615/C618, C622/C662, C628/C647, C631/C643, and C670/C695. Residues N50 and N116 are each glycosylated (N-linked (GlcNAc...) asparagine). Residues 124 to 363 (GYPIDLYYLM…ELIKNAYNKL (240 aa)) enclose the VWFA domain. Mg(2+)-binding residues include S136 and S138. 4 residues coordinate Ca(2+): S138, D141, D142, and D173. Positions 229, 231, 233, and 234 each coordinate Ca(2+). Mg(2+) is bound at residue E234. An N-linked (GlcNAc...) asparagine glycan is attached at N254. Ca(2+)-binding residues include D264 and E347. The Cell attachment site motif lies at 397 to 399 (RGD). I-EGF domains are found at residues 449 to 482 (CGDS…KHCE), 483 to 535 (CQTQ…QFCE), 536 to 574 (CDNM…SACQ), and 575 to 613 (CLKS…PLCT). N501 carries N-linked (GlcNAc...) asparagine glycosylation. An N-linked (GlcNAc...) asparagine glycan is attached at N642. The chain crosses the membrane as a helical span at residues 701 to 723 (IAAIVGGTVGGVVLVGIFLLVIW). The Cytoplasmic segment spans residues 724 to 769 (KVLTHLSDLREYKRFEKEKLKSQWNNDNPLFKSATTTVMNPKFAER). Phosphoserine is present on residues S745 and S756. Phosphothreonine occurs at positions 758 and 760.

It belongs to the integrin beta chain family. Heterodimer of an alpha and a beta subunit. The ITGB2 beta subunit associates with the ITGAL, ITGAM, ITGAX or ITGAD alpha subunits. Found in a complex with CD177 and ITGAM/CD11b. Interacts with FGR. Interacts with COPS5 and RANBP9. Interacts with FLNA (via filamin repeats 4, 9, 12, 17, 19, 21, and 23). Interacts with THBD. Both Ser-745 and Ser-756 become phosphorylated when T-cells are exposed to phorbol esters. Phosphorylation on Thr-758 (but not on Ser-756) allows interaction with 14-3-3 proteins.

It localises to the cell membrane. The protein localises to the membrane raft. Its function is as follows. Integrin ITGAL/ITGB2 is a receptor for ICAM1, ICAM2, ICAM3 and ICAM4. Integrin ITGAL/ITGB2 is also a receptor for the secreted form of ubiquitin-like protein ISG15; the interaction is mediated by ITGAL. Integrins ITGAM/ITGB2 and ITGAX/ITGB2 are receptors for the iC3b fragment of the third complement component and for fibrinogen. Integrin ITGAX/ITGB2 recognizes the sequence G-P-R in fibrinogen alpha-chain. Integrin ITGAM/ITGB2 recognizes P1 and P2 peptides of fibrinogen gamma chain. Integrin ITGAM/ITGB2 is also a receptor for factor X. Integrin ITGAD/ITGB2 is a receptor for ICAM3 and VCAM1. Contributes to natural killer cell cytotoxicity. Involved in leukocyte adhesion and transmigration of leukocytes including T-cells and neutrophils. Triggers neutrophil transmigration during lung injury through PTK2B/PYK2-mediated activation. Integrin alpha-L/beta-2 in association with ICAM3, contributes to apoptotic neutrophil phagocytosis by macrophages. This is Integrin beta-2 (ITGB2) from Sus scrofa (Pig).